The primary structure comprises 293 residues: TBC1 domain family member 7 (293 aa).

Positions Pro-50 to Ser-231 constitute a Rab-GAP TBC domain.

Component of the TSC-TBC complex (also named Rhebulator complex), composed of 2 molecules of TSC1, 2 molecules of TSC2 and 1 molecule of TBC1D7. Interacts with TSC1 (via C-terminal half of the coiled-coil domain). Highly expressed in heart, and slightly in kidney, liver and placenta.

Its subcellular location is the lysosome membrane. The protein resides in the cytoplasmic vesicle. The protein localises to the cytoplasm. It localises to the cytosol. Its function is as follows. Non-catalytic component of the TSC-TBC complex, a multiprotein complex that acts as a negative regulator of the canonical mTORC1 complex, an evolutionarily conserved central nutrient sensor that stimulates anabolic reactions and macromolecule biosynthesis to promote cellular biomass generation and growth. The TSC-TBC complex acts as a GTPase-activating protein (GAP) for the small GTPase RHEB, a direct activator of the protein kinase activity of mTORC1. In absence of nutrients, the TSC-TBC complex inhibits mTORC1, thereby preventing phosphorylation of ribosomal protein S6 kinase (RPS6KB1 and RPS6KB2) and EIF4EBP1 (4E-BP1) by the mTORC1 signaling. The TSC-TBC complex is inactivated in response to nutrients, relieving inhibition of mTORC1. This is TBC1 domain family member 7 from Homo sapiens (Human).